The sequence spans 295 residues: Putative S-adenosyl-L-methionine-dependent methyltransferase Mvan_0910 (295 aa).

S-adenosyl-L-methionine contacts are provided by residues D126 and 155–156 (DL).

The protein belongs to the UPF0677 family.

Functionally, exhibits S-adenosyl-L-methionine-dependent methyltransferase activity. This Mycolicibacterium vanbaalenii (strain DSM 7251 / JCM 13017 / BCRC 16820 / KCTC 9966 / NRRL B-24157 / PYR-1) (Mycobacterium vanbaalenii) protein is Putative S-adenosyl-L-methionine-dependent methyltransferase Mvan_0910.